The chain runs to 326 residues: MSIEVRNVSKNFNAFKALNNISLDIQSGELVALLGPSGCGKTTLLRIIAGLETPDDGSIVFHGEDVSGHDVRDRNVGFVFQHYALFRHMTVFDNVAFGLRMKPKSERPNETRIAEKVHELLNMVQLDWLADRYPEQLSGGQRQRIALARALAVEPKVLLLDEPFGALDAKVRKELRRWLARLHEDINLTSVFVTHDQEEAMEVADRIVVMNKGVIEQIGSPGEVYENPSNDFVYHFLGDSNRLSLGDEGHVLFRPHEVSLSRQEIEDHHAAEVRDIRPLGATTRVTLKVEGQNELIEAEVVKDHDSLVGLAKGETLFFKPKVWQKL.

The ABC transporter domain maps to 3 to 237; the sequence is IEVRNVSKNF…PSNDFVYHFL (235 aa). 35–42 contributes to the ATP binding site; sequence GPSGCGKT.

The protein belongs to the ABC transporter superfamily. Sulfate/tungstate importer (TC 3.A.1.6) family. The complex is composed of two ATP-binding proteins (CysA), two transmembrane proteins (CysT and CysW) and a solute-binding protein (CysP).

The protein localises to the cell inner membrane. It catalyses the reaction sulfate(out) + ATP + H2O = sulfate(in) + ADP + phosphate + H(+). The catalysed reaction is thiosulfate(out) + ATP + H2O = thiosulfate(in) + ADP + phosphate + H(+). Part of the ABC transporter complex CysAWTP involved in sulfate/thiosulfate import. Responsible for energy coupling to the transport system. This is Sulfate/thiosulfate import ATP-binding protein CysA from Pseudomonas syringae pv. tomato (strain ATCC BAA-871 / DC3000).